Here is a 314-residue protein sequence, read N- to C-terminus: Target of rapamycin complex subunit wat1 (314 aa).

WD repeat units lie at residues 1 to 35 (MSVQYPPQHSVLLVSSGYDHTIRFWEALSGICSRT), 38 to 76 (HADSQVNRLCISPDKKFLAAAGNPHVRLYDINTSSQMPL), 81 to 120 (GHTNNVTAIAFHCDGKWLATSSEDGTVKVWDMRAPSVQRN), 122 to 161 (DHKSPVNDLLIHPNQGELLSCDQSGRVRAWDLGENSCTHE), 165 to 204 (EEDVPMSSITVGSDGSMLIAGNNKGNCYVWRMLNHQGASL), 213 to 252 (AHQRYITRCVLSPDVKHLATCSADATVNIWSTEDMSFMLE), and 257 to 296 (GHQRWVWDCAFSADSTYLVTASSDHVARLWELSSGETIRQ). Residue serine 141 is modified to Phosphoserine.

This sequence belongs to the WD repeat LST8 family. The target of rapamycin complex 1 (TORC1) is composed of at least mip1, pop3/wat1, tco89, toc1 and tor2. The target of rapamycin complex 2 (TORC2) is composed of at least bit61, pop3/wat1, sin1, ste20 and tor1. Interacts with prp2.

It is found in the cytoplasm. Its subcellular location is the nucleus. In terms of biological role, component of both TORC1 and TORC2, which regulate multiple cellular processes to control cell growth in response to environmental signals. Nutrient limitation and environmental stress signals cause inactivation of TORC1. Active TORC1 positively controls cell growth and ribosome biogenesis by regulating ribosomal protein gene expression. TORC1 negatively controls G1 cell-cycle arrest, sexual development and amino acid uptake. Represses mating, meiosis and sporulation efficiency by interfering with the functions of the transcription factor ste11 and the meiosis-promoting RNA-binding protein mei2. TORC2 is required for cell survival under various stress conditions. TORC2 positively controls G1 cell-cycle arrest, sexual development and amino acid uptake. Positively regulates amino acid uptake through the control of expression of amino acid permeases. May play a role in mRNA maturation as a coupling protein between splicing and synthesis and/or stabilization. In Schizosaccharomyces pombe (strain 972 / ATCC 24843) (Fission yeast), this protein is Target of rapamycin complex subunit wat1.